We begin with the raw amino-acid sequence, 151 residues long: Group 10 secretory phospholipase A2 (151 aa).

An N-terminal signal peptide occupies residues 1 to 17; the sequence is MLLLLLLLLLGPGSCLS. Positions 18–28 are excised as a propeptide; it reads EATRRSHVYKR. Intrachain disulfides connect Cys-39–Cys-97, Cys-53–Cys-143, Cys-55–Cys-71, Cys-70–Cys-125, Cys-76–Cys-150, Cys-77–Cys-118, Cys-86–Cys-111, and Cys-104–Cys-116. 3 residues coordinate Ca(2+): Tyr-54, Gly-56, and Gly-58. Residue His-74 is part of the active site. A Ca(2+)-binding site is contributed by Asp-75. The active site involves Asp-119.

This sequence belongs to the phospholipase A2 family. In terms of assembly, interacts with PLA2R1; this interaction mediates PLA2G10 clearance and inactivation. Ca(2+) serves as cofactor.

The protein localises to the secreted. It localises to the lysosome. It is found in the cytoplasmic vesicle. The protein resides in the secretory vesicle. Its subcellular location is the acrosome. The enzyme catalyses a 1,2-diacyl-sn-glycero-3-phosphocholine + H2O = a 1-acyl-sn-glycero-3-phosphocholine + a fatty acid + H(+). The catalysed reaction is 1-hexadecanoyl-2-(9Z-octadecenoyl)-sn-glycero-3-phosphocholine + H2O = 1-hexadecanoyl-sn-glycero-3-phosphocholine + (9Z)-octadecenoate + H(+). It catalyses the reaction 1-octadecanoyl-2-(5Z,8Z,11Z,14Z-eicosatetraenoyl)-sn-glycero-3-phosphocholine + H2O = 1-octadecanoyl-sn-glycero-3-phosphocholine + (5Z,8Z,11Z,14Z)-eicosatetraenoate + H(+). It carries out the reaction 1,2-dihexadecanoyl-sn-glycero-3-phosphocholine + H2O = 1-hexadecanoyl-sn-glycero-3-phosphocholine + hexadecanoate + H(+). The enzyme catalyses 1-hexadecanoyl-2-(9Z-octadecenoyl)-sn-glycero-3-phosphoglycerol + H2O = 1-hexadecanoyl-sn-glycero-3-phosphoglycerol + (9Z)-octadecenoate + H(+). The catalysed reaction is 1,2-dihexadecanoyl-sn-glycero-3-phospho-(1'-sn-glycerol) + H2O = 1-hexadecanoyl-sn-glycero-3-phospho-(1'-sn-glycerol) + hexadecanoate + H(+). It catalyses the reaction 1-hexadecanoyl-2-(9Z-octadecenoyl)-sn-glycero-3-phospho-L-serine + H2O = 1-hexadecanoyl-sn-glycero-3-phospho-L-serine + (9Z)-octadecenoate + H(+). It carries out the reaction 1-hexadecanoyl-2-(9Z,12Z-octadecadienoyl)-sn-glycero-3-phosphoethanolamine + H2O = 1-hexadecanoyl-sn-glycero-3-phosphoethanolamine + (9Z,12Z)-octadecadienoate + H(+). The enzyme catalyses 1-hexadecanoyl-2-(9Z-octadecenoyl)-sn-glycero-3-phosphate + H2O = 1-hexadecanoyl-sn-glycero-3-phosphate + (9Z)-octadecenoate + H(+). The catalysed reaction is 1-O-hexadecyl-2-acetyl-sn-glycero-3-phosphocholine + H2O = 1-O-hexadecyl-sn-glycero-3-phosphocholine + acetate + H(+). Secretory calcium-dependent phospholipase A2 that primarily targets extracellular phospholipids. Hydrolyzes the ester bond of the fatty acyl group attached at sn-2 position of phospholipids with preference for phosphatidylcholines and phosphatidylglycerols over phosphatidylethanolamines. Preferentially releases sn-2 omega-6 and omega-3 polyunsaturated fatty acyl (PUFA) chains over saturated fatty acyls. Contributes to phospholipid remodeling of very low-density lipoprotein (VLDL), low-density lipoprotein (LDL) and high-density lipoprotein (HDL) particles. Hydrolyzes LDL phospholipids releasing unsaturated fatty acids that regulate macrophage differentiation toward foam cells. Efficiently hydrolyzes and inactivates platelet activating factor (PAF), a potent lipid mediator present in oxidized LDL. May act in an autocrine and paracrine manner. Secreted by lung epithelium, targets membrane phospholipids of infiltrating eosinophils, releasing arachidonate and boosting eicosanoid and cysteinyl leukotriene synthesis involved in airway inflammatory response. Secreted by gut epithelium, hydrolyzes dietary and biliary phosphatidylcholines in the gastrointestinal lumen. Plays a stem cell regulator role in colon epithelium. Within intracellular compartment, mediates Paneth-like cell differentiation and its stem cell supporting functions by inhibiting the Wnt signaling pathway in intestinal stem cell (ISC). Secreted in the intestinal lumen upon inflammation, acts in an autocrine way and promotes prostaglandin E2 synthesis that stimulates Wnt signaling pathway in ISCs and tissue regeneration. May participate in hair follicle morphogenesis by regulating phosphatidylethanolamines metabolism at the outermost epithelial layer and facilitating melanin synthesis. By releasing lysophosphatidylcholines (LPCs) at sperm acrosome, controls sperm cell capacitation, acrosome reaction and overall fertility. May promote neurite outgrowth in neuron fibers involved in nociception. Contributes to lipid remodeling of cellular membranes and generation of lipid mediators involved in pathogen clearance. Cleaves sn-2 fatty acyl chains of phosphatidylglycerols and phosphatidylethanolamines, which are major components of membrane phospholipids in bacteria. Displays bactericidal activity against Gram-positive bacteria by directly hydrolyzing phospholipids of the bacterial membrane. In pulmonary epithelium, may contribute to host defense response against adenoviral infection. Prevents adenovirus entry into host cells by hydrolyzing host cell plasma membrane, releasing C16:0 LPCs that inhibit virus-mediated membrane fusion and viral infection. Likely prevents adenoviral entry into the endosomes of host cells. May play a role in maturation and activation of innate immune cells including macrophages, group 2 innate lymphoid cells and mast cells. The polypeptide is Group 10 secretory phospholipase A2 (Pla2g10) (Rattus norvegicus (Rat)).